The chain runs to 393 residues: Acetate kinase (393 aa).

Asn6 serves as a coordination point for Mg(2+). Lys13 is a binding site for ATP. Arg87 lines the substrate pocket. The Proton donor/acceptor role is filled by Asp143. ATP contacts are provided by residues 203-207 (HLGNG), 278-280 (DMR), and 326-330 (GIGEN). Glu380 lines the Mg(2+) pocket.

This sequence belongs to the acetokinase family. Homodimer. Requires Mg(2+) as cofactor. It depends on Mn(2+) as a cofactor.

The protein resides in the cytoplasm. The enzyme catalyses acetate + ATP = acetyl phosphate + ADP. The protein operates within metabolic intermediate biosynthesis; acetyl-CoA biosynthesis; acetyl-CoA from acetate: step 1/2. Catalyzes the formation of acetyl phosphate from acetate and ATP. Can also catalyze the reverse reaction. This Mycoplasma capricolum subsp. capricolum (strain California kid / ATCC 27343 / NCTC 10154) protein is Acetate kinase.